Consider the following 546-residue polypeptide: Probable protein kinase UbiB (546 aa).

The Protein kinase domain maps to Asp124–Leu502. ATP is bound by residues Leu130–Val138 and Lys153. Asp288 acts as the Proton acceptor in catalysis. Transmembrane regions (helical) follow at residues Tyr501–Pro521 and Glu522–Trp542.

The protein belongs to the ABC1 family. UbiB subfamily.

It is found in the cell inner membrane. It participates in cofactor biosynthesis; ubiquinone biosynthesis [regulation]. Its function is as follows. Is probably a protein kinase regulator of UbiI activity which is involved in aerobic coenzyme Q (ubiquinone) biosynthesis. The protein is Probable protein kinase UbiB of Salmonella gallinarum (strain 287/91 / NCTC 13346).